Reading from the N-terminus, the 201-residue chain is Large ribosomal subunit protein uL4 (201 aa).

Residues 46 to 71 (QKTRAEVVGSGKKPWRQKGTGRARAG) form a disordered region.

The protein belongs to the universal ribosomal protein uL4 family. As to quaternary structure, part of the 50S ribosomal subunit.

One of the primary rRNA binding proteins, this protein initially binds near the 5'-end of the 23S rRNA. It is important during the early stages of 50S assembly. It makes multiple contacts with different domains of the 23S rRNA in the assembled 50S subunit and ribosome. Its function is as follows. Forms part of the polypeptide exit tunnel. In Shewanella piezotolerans (strain WP3 / JCM 13877), this protein is Large ribosomal subunit protein uL4.